Consider the following 338-residue polypeptide: DNA fragmentation factor subunit beta (338 aa).

The 77-residue stretch at 4 to 80 (KPKSVKLRAL…LLTLGQAWQG (77 aa)) folds into the CIDE-N domain.

In terms of assembly, heterodimer of DFFA and DFFB. Interacts with H1-1.

It localises to the cytoplasm. Its subcellular location is the nucleus. With respect to regulation, inhibited by DFFA (DFF45). Its function is as follows. Nuclease that induces DNA fragmentation and chromatin condensation during apoptosis. Degrades naked DNA and induces apoptotic morphology. In Homo sapiens (Human), this protein is DNA fragmentation factor subunit beta (DFFB).